Consider the following 318-residue polypeptide: Lipid A biosynthesis acyltransferase (318 aa).

The chain crosses the membrane as a helical span at residues 27–47 (PQYWGIWLGIFFLLLLAFVPF). Positions 145 to 150 (HGWAID) match the HXXXXD motif motif.

It belongs to the LpxL/LpxM/LpxP family. LpxM subfamily.

The protein localises to the cell inner membrane. The catalysed reaction is an alpha-Kdo-(2-&gt;4)-alpha-Kdo-(2-&gt;6)-(acyl)-lipid IVA + a fatty acyl-[ACP] = an alpha-Kdo-(2-&gt;4)-alpha-Kdo-(2-&gt;6)-lipid A + holo-[ACP]. It functions in the pathway glycolipid biosynthesis; KDO(2)-lipid A biosynthesis; KDO(2)-lipid A from CMP-3-deoxy-D-manno-octulosonate and lipid IV(A): step 4/4. Its pathway is bacterial outer membrane biogenesis; lipopolysaccharide biosynthesis. Functionally, catalyzes the transfer of an acyl chain from an acyl-[acyl-carrier-protein] (ACP) to a Kdo(2)-(acyl)-lipid IV(A) to form a Kdo(2)-lipid A. The protein is Lipid A biosynthesis acyltransferase of Haemophilus influenzae (strain ATCC 51907 / DSM 11121 / KW20 / Rd).